The sequence spans 341 residues: tRNA N6-adenosine threonylcarbamoyltransferase (341 aa).

Fe cation contacts are provided by His-115 and His-119. Residues 137–141 (IVSGG), Asp-170, Gly-183, Asp-187, and Asn-276 contribute to the substrate site. A Fe cation-binding site is contributed by Asp-304.

This sequence belongs to the KAE1 / TsaD family. Fe(2+) is required as a cofactor.

The protein resides in the cytoplasm. The enzyme catalyses L-threonylcarbamoyladenylate + adenosine(37) in tRNA = N(6)-L-threonylcarbamoyladenosine(37) in tRNA + AMP + H(+). Its function is as follows. Required for the formation of a threonylcarbamoyl group on adenosine at position 37 (t(6)A37) in tRNAs that read codons beginning with adenine. Is involved in the transfer of the threonylcarbamoyl moiety of threonylcarbamoyl-AMP (TC-AMP) to the N6 group of A37, together with TsaE and TsaB. TsaD likely plays a direct catalytic role in this reaction. This chain is tRNA N6-adenosine threonylcarbamoyltransferase, found in Staphylococcus aureus (strain Mu3 / ATCC 700698).